We begin with the raw amino-acid sequence, 510 residues long: NAD(P)H-quinone oxidoreductase subunit 2, chloroplastic (510 aa).

The next 12 membrane-spanning stretches (helical) occupy residues Leu-24–Leu-44, Trp-59–Trp-79, Ile-99–Ile-119, Met-124–Cys-144, Leu-149–Tyr-169, Tyr-183–Gly-203, Ile-229–Phe-249, Trp-295–Ile-315, Met-323–Asp-343, Gly-347–Ala-367, Ala-395–Phe-415, and Leu-418–Leu-438.

This sequence belongs to the complex I subunit 2 family. In terms of assembly, NDH is composed of at least 16 different subunits, 5 of which are encoded in the nucleus.

It is found in the plastid. It localises to the chloroplast thylakoid membrane. It catalyses the reaction a plastoquinone + NADH + (n+1) H(+)(in) = a plastoquinol + NAD(+) + n H(+)(out). It carries out the reaction a plastoquinone + NADPH + (n+1) H(+)(in) = a plastoquinol + NADP(+) + n H(+)(out). Functionally, NDH shuttles electrons from NAD(P)H:plastoquinone, via FMN and iron-sulfur (Fe-S) centers, to quinones in the photosynthetic chain and possibly in a chloroplast respiratory chain. The immediate electron acceptor for the enzyme in this species is believed to be plastoquinone. Couples the redox reaction to proton translocation, and thus conserves the redox energy in a proton gradient. The chain is NAD(P)H-quinone oxidoreductase subunit 2, chloroplastic from Yucca glauca (Soapweed yucca).